We begin with the raw amino-acid sequence, 155 residues long: Ribosomal RNA large subunit methyltransferase H (155 aa).

S-adenosyl-L-methionine-binding positions include Leu-72, Gly-103, and 122–127 (LSALTL).

This sequence belongs to the RNA methyltransferase RlmH family. Homodimer.

The protein localises to the cytoplasm. It catalyses the reaction pseudouridine(1915) in 23S rRNA + S-adenosyl-L-methionine = N(3)-methylpseudouridine(1915) in 23S rRNA + S-adenosyl-L-homocysteine + H(+). In terms of biological role, specifically methylates the pseudouridine at position 1915 (m3Psi1915) in 23S rRNA. This is Ribosomal RNA large subunit methyltransferase H from Salmonella choleraesuis (strain SC-B67).